The primary structure comprises 638 residues: Neuroendocrine convertase 2 (638 aa).

Positions 1-25 (MKGGCVSQWKAAAGFLFCVMVFASA) are cleaved as a signal peptide. A propeptide spanning residues 26–109 (ERPVFTNHFL…QQEGFDRKKR (84 aa)) is cleaved from the precursor. The Peptidase S8 domain maps to 129–453 (QWYLINTGQA…YGVLDAGAMV (325 aa)). Catalysis depends on charge relay system residues D167 and H208. 2 disulfides stabilise this stretch: C225–C376 and C317–C347. Residue N375 is glycosylated (N-linked (GlcNAc...) asparagine). The active-site Charge relay system is S384. The P/Homo B domain maps to 461–597 (TVPERFHCVG…TLMLHGTQSA (137 aa)). The cysteines at positions 468 and 494 are disulfide-linked. Residues N514 and N524 are each glycosylated (N-linked (GlcNAc...) asparagine).

The protein belongs to the peptidase S8 family. Furin subfamily.

Its subcellular location is the cytoplasmic vesicle. The protein localises to the secretory vesicle. It localises to the secreted. The catalysed reaction is Release of protein hormones and neuropeptides from their precursors, generally by hydrolysis of -Lys-Arg-|- bonds.. In terms of biological role, serine endopeptidase which is involved in the processing of hormone and other protein precursors at sites comprised of pairs of basic amino acid residues. Responsible for the release of glucagon from proglucagon in pancreatic A cells. The sequence is that of Neuroendocrine convertase 2 (PCSK2) from Homo sapiens (Human).